A 299-amino-acid polypeptide reads, in one-letter code: Acetyl-coenzyme A carboxylase carboxyl transferase subunit beta (299 aa).

The CoA carboxyltransferase N-terminal domain occupies 25–294 (VWTKCTSCEQ…PFVEPELIQE (270 aa)). Positions 29, 32, 48, and 51 each coordinate Zn(2+). The C4-type zinc finger occupies 29–51 (CTSCEQVLYRDELKRHLEVCPKC).

This sequence belongs to the AccD/PCCB family. As to quaternary structure, acetyl-CoA carboxylase is a heterohexamer composed of biotin carboxyl carrier protein (AccB), biotin carboxylase (AccC) and two subunits each of ACCase subunit alpha (AccA) and ACCase subunit beta (AccD). It depends on Zn(2+) as a cofactor.

Its subcellular location is the cytoplasm. It catalyses the reaction N(6)-carboxybiotinyl-L-lysyl-[protein] + acetyl-CoA = N(6)-biotinyl-L-lysyl-[protein] + malonyl-CoA. It functions in the pathway lipid metabolism; malonyl-CoA biosynthesis; malonyl-CoA from acetyl-CoA: step 1/1. In terms of biological role, component of the acetyl coenzyme A carboxylase (ACC) complex. Biotin carboxylase (BC) catalyzes the carboxylation of biotin on its carrier protein (BCCP) and then the CO(2) group is transferred by the transcarboxylase to acetyl-CoA to form malonyl-CoA. The protein is Acetyl-coenzyme A carboxylase carboxyl transferase subunit beta of Histophilus somni (strain 129Pt) (Haemophilus somnus).